We begin with the raw amino-acid sequence, 333 residues long: DNA-directed RNA polymerase subunit alpha (333 aa).

An alpha N-terminal domain (alpha-NTD) region spans residues 1-233 (MVREKIRVST…DLFIPFLHAE (233 aa)). An alpha C-terminal domain (alpha-CTD) region spans residues 267–333 (KEIALKSIFI…DFLEIEKHFA (67 aa)).

This sequence belongs to the RNA polymerase alpha chain family. As to quaternary structure, in plastids the minimal PEP RNA polymerase catalytic core is composed of four subunits: alpha, beta, beta', and beta''. When a (nuclear-encoded) sigma factor is associated with the core the holoenzyme is formed, which can initiate transcription.

It is found in the plastid. Its subcellular location is the chloroplast. The enzyme catalyses RNA(n) + a ribonucleoside 5'-triphosphate = RNA(n+1) + diphosphate. Functionally, DNA-dependent RNA polymerase catalyzes the transcription of DNA into RNA using the four ribonucleoside triphosphates as substrates. This is DNA-directed RNA polymerase subunit alpha from Glycine max (Soybean).